The following is a 261-amino-acid chain: uncharacterized protein (261 aa).

An N-terminal signal peptide occupies residues 1 to 22 (MKYYGKCISYISILILTFFIGG). A lipid anchor (N-palmitoyl cysteine) is attached at Cys-23. The S-diacylglycerol cysteine moiety is linked to residue Cys-23.

It belongs to the staphylococcal tandem lipoprotein family.

Its subcellular location is the cell membrane. This is an uncharacterized protein from Staphylococcus epidermidis (strain ATCC 12228 / FDA PCI 1200).